Consider the following 364-residue polypeptide: Endoglucanase A (364 aa).

Catalysis depends on glutamate 169, which acts as the Proton donor. Glutamate 293 functions as the Nucleophile in the catalytic mechanism.

Belongs to the glycosyl hydrolase 5 (cellulase A) family.

It is found in the cytoplasm. The catalysed reaction is Endohydrolysis of (1-&gt;4)-beta-D-glucosidic linkages in cellulose, lichenin and cereal beta-D-glucans.. It catalyses the reaction Endohydrolysis of (1-&gt;4)-beta-D-xylosidic linkages in xylans.. Functionally, hydrolyzes both carboxymethylcellulose and xylan. Probably has a role in hydrolyzing oligosaccharides derived from cellulose, which are transported across the cell wall. The chain is Endoglucanase A (celA) from Ruminococcus albus.